The chain runs to 3598 residues: Dystrophin, isoforms A/C/F/G/H (3598 aa).

The segment at 1–230 (MEPGILIDER…YVMCLYHAME (230 aa)) is actin-binding. Calponin-homology (CH) domains lie at 12-116 (HIQK…LEFN) and 127-230 (NGVE…HAME). The tract at residues 233–297 (RTRQQEQEQD…SGELKTHSMR (65 aa)) is disordered. Over residues 267–286 (NDQTSLGLYTSDSAGSMEQR) the composition is skewed to polar residues. 6 Spectrin repeats span residues 307–420 (VEIS…KILM), 423–525 (AEFQ…KLQQ), 851–963 (QDFG…AIEN), 1056–1170 (SHID…LLEH), 1173–1275 (TQLG…LLEQ), and 1381–1483 (SYES…TLER). Disordered regions lie at residues 1633 to 1696 (ARNT…VMPD), 1716 to 1742 (SLNP…SSPA), 1799 to 1854 (EDSD…ENTS), 1878 to 1941 (RDIL…EPLV), and 2204 to 2233 (GPRI…NEPS). The span at 1663-1679 (SGESPSSAHTSSSESPT) shows a compositional bias: low complexity. Basic and acidic residues predominate over residues 1803–1816 (SSVRVDSQGKEMRR). Phosphoserine occurs at positions 1832 and 1838. Residues 1834–1843 (NDEDSAEQEE) are compositionally biased toward acidic residues. Positions 1878-1893 (RDILRDSEEEEPKTPD) are enriched in basic and acidic residues. The span at 2218-2233 (SAATMSCRSEYNNEPS) shows a compositional bias: polar residues. 5 Spectrin repeats span residues 2237 to 2363 (ALAG…QLKN), 2366 to 2472 (SDSQ…QLHA), 2475 to 2576 (HSLQ…RLES), 2579 to 2712 (EHWN…RLDE), and 2715 to 2819 (TKMR…VLCQ). A disordered region spans residues 2655-2679 (VSDTSDTEANHDSDSRYMSAEEQSR). The tract at residues 2822-2852 (AQQTHENGDDGRTTSNSGTIGPLPNLGQSVK) is disordered. One can recognise a WW domain in the interval 2849–2882 (QSVKPPWERATTAANVPYYIDHERETTHWDHPEM). The segment at 3107 to 3163 (KHQAKCNICKEYPIVGFRYRCLKCFNFDMCQKCFFFGRNAKNHKLTHPMHEYCTTTT) adopts a ZZ-type zinc-finger fold. Residues Cys3112, Cys3115, Cys3127, Cys3130, Cys3136, Cys3139, His3149, and His3153 each coordinate Zn(2+). Phosphoserine is present on Ser3207. Disordered stretches follow at residues 3316 to 3344 (EQSG…GEQG), 3387 to 3449 (DEPN…KGIM), 3483 to 3545 (LHQQ…QQHL), and 3560 to 3598 (ELES…ELQK). 2 stretches are compositionally biased toward polar residues: residues 3325-3337 (NGMQ…MTGL) and 3408-3439 (ALNS…QQNG). Residues 3485–3499 (QQQQQQLQQQPPQQQ) are compositionally biased toward low complexity. Residues 3505–3523 (GNGGMDISGGMQTSGGYLG) are compositionally biased toward gly residues. Residues 3534–3545 (SSLMQQQHQQHL) show a composition bias toward low complexity. Over residues 3560–3570 (ELESINDDLED) the composition is skewed to acidic residues. The span at 3571 to 3589 (SSSSNTTNTTTTTTTTATT) shows a compositional bias: low complexity.

As to quaternary structure, component of the dystrophin associated protein complex (DAPC). Interacts with Dg, via the Dg WW domain binding sites. As to expression, isoform A, isoform F and isoform G are expressed in the midgut endoderm of stage 12 embryos. In stage 16 embryos, expression is also seen in the pericardial cells, cells at the ectoderm segmental border and cells along the midline of the CNS. During embryogenesis, isoform A is also expressed in the visceral mesoderm, muscle attachment sites, mesectodermal cells at the midline, the gut, and throughout muscle fibers. In larvae, isoform A is found in all muscle fibers, but not detectable in the brain or neuropil.

It localises to the cell membrane. The protein localises to the sarcolemma. It is found in the cytoplasm. Its subcellular location is the cytoskeleton. Functionally, required for the maintenance of appropriate synaptic retrograde communication and the stabilization of muscle cell architecture or physiology. Both det and Dg are required for maintenance of early dpp signaling in the presumptive crossvein. Isoform A is not required to maintain muscle integrity, but plays a role in neuromuscular homeostasis by regulating neurotransmitter release. May play a role in anchoring the cytoskeleton to the plasma membrane. This chain is Dystrophin, isoforms A/C/F/G/H (Dys), found in Drosophila melanogaster (Fruit fly).